Here is a 472-residue protein sequence, read N- to C-terminus: Na(+)/H(+) antiporter NhaA (472 aa).

Transmembrane regions (helical) follow at residues 24–44, 66–86, 108–128, 156–176, 196–216, 234–254, 290–310, 312–332, 361–381, and 392–412; these read ISGL…NLPA, LPIG…TVGL, LCAV…TALF, GWAV…ALFA, LLAI…YWFI, VPWI…FEAG, PFSA…VHFE, MSPL…LVVG, MIPA…IASL, and ARFG…VLLS. Residues 422 to 472 are disordered; it reads AAAAAADEEDDESIDGDGIGQPSHTTEPTTPTEHPGTLADGTASVEIDFRH. Residues 427-436 show a composition bias toward acidic residues; sequence ADEEDDESID. Positions 445–456 are enriched in low complexity; it reads HTTEPTTPTEHP.

This sequence belongs to the NhaA Na(+)/H(+) (TC 2.A.33) antiporter family.

The protein localises to the cell membrane. It catalyses the reaction Na(+)(in) + 2 H(+)(out) = Na(+)(out) + 2 H(+)(in). Na(+)/H(+) antiporter that extrudes sodium in exchange for external protons. The sequence is that of Na(+)/H(+) antiporter NhaA from Bifidobacterium longum (strain NCC 2705).